The primary structure comprises 415 residues: Multidrug resistance protein MdtA (415 aa).

An N-terminal signal peptide occupies residues 1 to 21; that stretch reads MKGSYKSRWVIVIVVVIAAIA. Disordered stretches follow at residues 32–56 and 392–415; these read SRSA…GMRA and EAQS…GARS. Residues 399–415 show a composition bias toward basic and acidic residues; that stretch reads SEEKATSREYAKKGARS.

The protein belongs to the membrane fusion protein (MFP) (TC 8.A.1) family. As to quaternary structure, part of a tripartite efflux system composed of MdtA, MdtB and MdtC.

Its subcellular location is the cell inner membrane. In terms of biological role, the MdtABC tripartite complex confers resistance against novobiocin and deoxycholate. The chain is Multidrug resistance protein MdtA from Escherichia coli O7:K1 (strain IAI39 / ExPEC).